The primary structure comprises 240 residues: UDP-2,3-diacylglucosamine hydrolase (240 aa).

Residues aspartate 8, histidine 10, aspartate 41, asparagine 79, and histidine 114 each coordinate Mn(2+). Residue 79–80 (NR) coordinates substrate. 5 residues coordinate substrate: aspartate 122, serine 160, threonine 164, lysine 167, and histidine 195. Residues histidine 195 and histidine 197 each contribute to the Mn(2+) site.

Belongs to the LpxH family. Mn(2+) serves as cofactor.

The protein localises to the cell inner membrane. The enzyme catalyses UDP-2-N,3-O-bis[(3R)-3-hydroxytetradecanoyl]-alpha-D-glucosamine + H2O = 2-N,3-O-bis[(3R)-3-hydroxytetradecanoyl]-alpha-D-glucosaminyl 1-phosphate + UMP + 2 H(+). It functions in the pathway glycolipid biosynthesis; lipid IV(A) biosynthesis; lipid IV(A) from (3R)-3-hydroxytetradecanoyl-[acyl-carrier-protein] and UDP-N-acetyl-alpha-D-glucosamine: step 4/6. In terms of biological role, hydrolyzes the pyrophosphate bond of UDP-2,3-diacylglucosamine to yield 2,3-diacylglucosamine 1-phosphate (lipid X) and UMP by catalyzing the attack of water at the alpha-P atom. Involved in the biosynthesis of lipid A, a phosphorylated glycolipid that anchors the lipopolysaccharide to the outer membrane of the cell. This chain is UDP-2,3-diacylglucosamine hydrolase, found in Pseudomonas paraeruginosa (strain DSM 24068 / PA7) (Pseudomonas aeruginosa (strain PA7)).